Reading from the N-terminus, the 365-residue chain is Zinc finger MYND domain-containing protein 12 (365 aa).

Positions 17, 20, 28, 31, 37, 41, 50, and 54 each coordinate Zn(2+). The MYND-type; atypical zinc finger occupies 17–54; that stretch reads CEVCEAPAERVCAACTVTYYCGVVHQKADWDSIHEKIC. TPR repeat units lie at residues 172–205 and 214–247; these read SLLH…ASCA and SGGY…WHAY.

As to expression, expressed predominantly in the testis.

Its subcellular location is the cell projection. It is found in the cilium. The protein localises to the flagellum. Required for sperm flagellum function and male fertility. This is Zinc finger MYND domain-containing protein 12 (ZMYND12) from Homo sapiens (Human).